The primary structure comprises 929 residues: Chitin synthase 1 (929 aa).

Residues 1 to 12 are compositionally biased toward gly residues; sequence MAYRGAGGPGGG. 2 disordered regions span residues 1–43 and 114–156; these read MAYR…QEDE and MGGH…GGGL. Composition is skewed to polar residues over residues 21–33 and 140–149; these read QDLN…SNVQ and SWVQRQNPNA. A glycan (N-linked (GlcNAc...) asparagine) is linked at Asn-560. The next 5 helical transmembrane spans lie at 587–607, 643–663, 678–698, 730–750, and 758–778; these read FFFH…WFSL, LFNA…FILA, SFFV…YLVV, VILL…FMYL, and SFPY…VYAF. Asn-801 carries an N-linked (GlcNAc...) asparagine glycan. A run of 2 helical transmembrane segments spans residues 857–877 and 897–917; these read TMLV…ITSD and FLLF…LWFL.

The protein belongs to the chitin synthase family. Class III subfamily.

The protein localises to the cell membrane. The enzyme catalyses [(1-&gt;4)-N-acetyl-beta-D-glucosaminyl](n) + UDP-N-acetyl-alpha-D-glucosamine = [(1-&gt;4)-N-acetyl-beta-D-glucosaminyl](n+1) + UDP + H(+). Polymerizes chitin, a structural polymer of the cell wall and septum, by transferring the sugar moiety of UDP-GlcNAc to the non-reducing end of the growing chitin polymer. CHS1 and CHS3 have compensatory functions in cell wall modifications in responses to stresses. Involved in appressoria formation and required for full virulence. The polypeptide is Chitin synthase 1 (Pyricularia oryzae (strain 70-15 / ATCC MYA-4617 / FGSC 8958) (Rice blast fungus)).